The chain runs to 414 residues: Histidine--tRNA ligase (414 aa).

Belongs to the class-II aminoacyl-tRNA synthetase family. Homodimer.

The protein resides in the cytoplasm. It catalyses the reaction tRNA(His) + L-histidine + ATP = L-histidyl-tRNA(His) + AMP + diphosphate + H(+). The polypeptide is Histidine--tRNA ligase (hisS) (Mycoplasma pneumoniae (strain ATCC 29342 / M129 / Subtype 1) (Mycoplasmoides pneumoniae)).